Consider the following 1165-residue polypeptide: Symplekin (1165 aa).

5 HEAT repeats span residues 23–58 (TATA…TVLG), 61–95 (AELA…QVCK), 98–140 (VELL…YLCS), 147–186 (SAEQ…GVVV), and 218–257 (KLQE…IAKM). Residues 365 to 384 (DQQQREMELDTEELERQKQK) form a disordered region. Residues 367 to 384 (QQREMELDTEELERQKQK) are compositionally biased toward basic and acidic residues.

It belongs to the Symplekin family. Interacts with Cpsf73 and Cpsf100 forming a core cleavage factor required for both polyadenylated and histone mRNA processing. Interacts with Slbp and Lsm11.

The protein resides in the nucleus. Component of a protein complex required for cotranscriptional processing of 3'-ends of polyadenylated and histone pre-mRNA. Involved in germline stem cell transit amplification, differentiation and mitosis-to-meiosis transition. This chain is Symplekin, found in Drosophila melanogaster (Fruit fly).